Here is a 345-residue protein sequence, read N- to C-terminus: MSKDIKLTSLTKNSGCAAKIGPGVLHSVLSSLPKFEDENLIVGFDTSDDACVYKINDDTVVIKTVDFFPPMVDDPYTFGQVAAANALSDVYAMGGNPSIAMNLICFPSCLDISIMREILAGGYDKVKEAGAVIAGGHTIADPTPKYGLCVSGFARPEEILSNSNAKTGDVIILTKPLGIGIMNTAAKAELIDENKIKEVTSIMSTLNKYAKECTLGLEIHSCTDVTGFGLIGHSYEMASGSKKTIEIFSESIPIIDGALDYAKMGIIPEGMYNNLDYLKDKFAVGANISQELQDVLIDPQTSGGLLLSLPEKQAKEFLSRIENFTPYARIIGQVLDKGDKPIVIK.

Cys16 is an active-site residue. Residues Lys19 and 46 to 48 (TSD) contribute to the ATP site. Asp49 contacts Mg(2+). Residues Asp66, Asp89, and 136 to 138 (GHT) each bind ATP. Asp89 lines the Mg(2+) pocket. Asp224 lines the Mg(2+) pocket.

Belongs to the selenophosphate synthase 1 family. Class I subfamily. In terms of assembly, homodimer. Mg(2+) is required as a cofactor.

The catalysed reaction is hydrogenselenide + ATP + H2O = selenophosphate + AMP + phosphate + 2 H(+). Functionally, synthesizes selenophosphate from selenide and ATP. This Clostridium botulinum (strain Eklund 17B / Type B) protein is Selenide, water dikinase.